The chain runs to 624 residues: Membrane protein insertase YidC (624 aa).

The helical transmembrane segment at 8–28 threads the bilayer; sequence MIIAIALSLAVLLGWNYFVTA. The disordered stretch occupies residues 36–95; the sequence is QQQAAQVNPSQGVNPSQGVDPSQGVNASPSPKEGGPSAPVPGTLPGAAGGSPQAALARDE. Polar residues predominate over residues 43-64; the sequence is NPSQGVNPSQGVDPSQGVNASP. 5 consecutive transmembrane segments (helical) span residues 370–390, 396–416, 470–490, 526–542, and 559–579; these read FDLL…FKAL, LFGN…LFFL, WPVL…FVTI, LLHL…TMFL, and FTFM…GLVI.

The protein belongs to the OXA1/ALB3/YidC family. Type 1 subfamily. As to quaternary structure, interacts with the Sec translocase complex via SecD. Specifically interacts with transmembrane segments of nascent integral membrane proteins during membrane integration.

Its subcellular location is the cell inner membrane. In terms of biological role, required for the insertion and/or proper folding and/or complex formation of integral membrane proteins into the membrane. Involved in integration of membrane proteins that insert both dependently and independently of the Sec translocase complex, as well as at least some lipoproteins. Aids folding of multispanning membrane proteins. The chain is Membrane protein insertase YidC from Methylobacterium sp. (strain 4-46).